The chain runs to 124 residues: Large ribosomal subunit protein bL12 (124 aa).

The protein belongs to the bacterial ribosomal protein bL12 family. As to quaternary structure, homodimer. Part of the ribosomal stalk of the 50S ribosomal subunit. Forms a multimeric L10(L12)X complex, where L10 forms an elongated spine to which 2 to 4 L12 dimers bind in a sequential fashion. Binds GTP-bound translation factors.

In terms of biological role, forms part of the ribosomal stalk which helps the ribosome interact with GTP-bound translation factors. Is thus essential for accurate translation. The chain is Large ribosomal subunit protein bL12 from Janthinobacterium sp. (strain Marseille) (Minibacterium massiliensis).